A 144-amino-acid polypeptide reads, in one-letter code: MVVRREKKSRKMRGSRTMGWGIRGQHRDRGSQGGRQIGMHKEKWSWLVKYGKGWYGKHGFRNPTTKLTSAISLRKLNELLESGYIKIKEMDGKKIVDLNELGYNKLLGGGSISIPVTIKVGKATNKAIQKVKEMGGEVILSPTE.

Residues 1–14 (MVVRREKKSRKMRG) show a composition bias toward basic residues. The disordered stretch occupies residues 1–35 (MVVRREKKSRKMRGSRTMGWGIRGQHRDRGSQGGR).

This sequence belongs to the universal ribosomal protein uL15 family. In terms of assembly, part of the 50S ribosomal subunit.

In terms of biological role, binds to the 23S rRNA. The sequence is that of Large ribosomal subunit protein uL15 from Saccharolobus solfataricus (strain ATCC 35092 / DSM 1617 / JCM 11322 / P2) (Sulfolobus solfataricus).